Reading from the N-terminus, the 127-residue chain is Gamma-synuclein (127 aa).

2 consecutive repeat copies span residues 20-30 (EKTKQGVTEAA) and 31-41 (EKTKEGVMYVG). The tract at residues 20–67 (EKTKQGVTEAAEKTKEGVMYVGAKTKEGVVQSVTSVAEKTKEQANAVS) is 4 X 11 AA tandem repeats of [EGSA]-K-T-K-[EQ]-[GQ]-V-X(4). The 3; approximate repeat unit spans residues 42–56 (AKTKEGVVQSVTSVA). Residues 57–67 (EKTKEQANAVS) form repeat 4. Phosphoserine is present on residues S67, S72, and S124. Residues 99-127 (ALKQPVPSQEDEAAKAEEQVAEETKSGGD) are disordered. Residues 110-127 (EAAKAEEQVAEETKSGGD) show a composition bias toward basic and acidic residues.

The protein belongs to the synuclein family. May be a centrosome-associated protein. Interacts with MYOC; affects its secretion and its aggregation. Post-translationally, phosphorylated by BARK1 and GRK5. In terms of tissue distribution, predominantly expressed in retina (predominantly in outer nuclear layer, also in inner segment of photoreceptor cells, some individual cells located in the inner nuclear layer, inner plexiform layer and in nerve fiber layer). Also found in brain and heart.

It localises to the cytoplasm. It is found in the perinuclear region. Its subcellular location is the cytoskeleton. The protein localises to the microtubule organizing center. The protein resides in the centrosome. It localises to the spindle. Its function is as follows. Plays a role in neurofilament network integrity. May be involved in modulating axonal architecture during development and in the adult. In vitro, increases the susceptibility of neurofilament-H to calcium-dependent proteases. May also function in modulating the keratin network in skin. Activates the MAPK and Elk-1 signal transduction pathway. The polypeptide is Gamma-synuclein (SNCG) (Bos taurus (Bovine)).